Reading from the N-terminus, the 201-residue chain is 3-isopropylmalate dehydratase small subunit (201 aa).

Belongs to the LeuD family. LeuD type 1 subfamily. As to quaternary structure, heterodimer of LeuC and LeuD.

The enzyme catalyses (2R,3S)-3-isopropylmalate = (2S)-2-isopropylmalate. It functions in the pathway amino-acid biosynthesis; L-leucine biosynthesis; L-leucine from 3-methyl-2-oxobutanoate: step 2/4. Functionally, catalyzes the isomerization between 2-isopropylmalate and 3-isopropylmalate, via the formation of 2-isopropylmaleate. This is 3-isopropylmalate dehydratase small subunit from Shewanella putrefaciens (strain CN-32 / ATCC BAA-453).